The chain runs to 322 residues: Acetyl-coenzyme A carboxylase carboxyl transferase subunit alpha (322 aa).

In terms of domain architecture, CoA carboxyltransferase C-terminal spans 30-293 (ALDISAEIAR…KQTLQESLRK (264 aa)).

It belongs to the AccA family. Acetyl-CoA carboxylase is a heterohexamer composed of biotin carboxyl carrier protein (AccB), biotin carboxylase (AccC) and two subunits each of ACCase subunit alpha (AccA) and ACCase subunit beta (AccD).

The protein resides in the cytoplasm. It carries out the reaction N(6)-carboxybiotinyl-L-lysyl-[protein] + acetyl-CoA = N(6)-biotinyl-L-lysyl-[protein] + malonyl-CoA. Its pathway is lipid metabolism; malonyl-CoA biosynthesis; malonyl-CoA from acetyl-CoA: step 1/1. Component of the acetyl coenzyme A carboxylase (ACC) complex. First, biotin carboxylase catalyzes the carboxylation of biotin on its carrier protein (BCCP) and then the CO(2) group is transferred by the carboxyltransferase to acetyl-CoA to form malonyl-CoA. The sequence is that of Acetyl-coenzyme A carboxylase carboxyl transferase subunit alpha from Nitrosomonas europaea (strain ATCC 19718 / CIP 103999 / KCTC 2705 / NBRC 14298).